A 335-amino-acid chain; its full sequence is NADH-quinone oxidoreductase subunit H (335 aa).

8 helical membrane passes run 11–31, 81–101, 114–134, 154–174, 187–207, 238–258, 270–290, and 309–329; these read VIIS…AGAL, VIFT…FAVI, IGLL…LFAG, VSYE…VGSF, LWFI…GVAV, FFVG…TLFF, QLAF…FILL, and FCLP…LLNT.

It belongs to the complex I subunit 1 family. In terms of assembly, NDH-1 is composed of 13 different subunits. Subunits NuoA, H, J, K, L, M, N constitute the membrane sector of the complex.

Its subcellular location is the cell inner membrane. It catalyses the reaction a quinone + NADH + 5 H(+)(in) = a quinol + NAD(+) + 4 H(+)(out). In terms of biological role, NDH-1 shuttles electrons from NADH, via FMN and iron-sulfur (Fe-S) centers, to quinones in the respiratory chain. The immediate electron acceptor for the enzyme in this species is believed to be ubiquinone. Couples the redox reaction to proton translocation (for every two electrons transferred, four hydrogen ions are translocated across the cytoplasmic membrane), and thus conserves the redox energy in a proton gradient. This subunit may bind ubiquinone. The chain is NADH-quinone oxidoreductase subunit H from Pseudomonas fluorescens (strain SBW25).